We begin with the raw amino-acid sequence, 239 residues long: Lactate utilization protein A (239 aa).

This sequence belongs to the LutA/YkgE family.

In terms of biological role, is involved in L-lactate degradation and allows cells to grow with lactate as the sole carbon source. The chain is Lactate utilization protein A from Bacillus cereus (strain G9842).